The chain runs to 743 residues: Phosphoribosylformylglycinamidine synthase subunit PurL (743 aa).

Residue His54 is part of the active site. Residues Tyr57 and Lys96 each coordinate ATP. Glu98 is a binding site for Mg(2+). Residues 99–102 (SHNH) and Arg121 each bind substrate. His100 (proton acceptor) is an active-site residue. Residue Asp122 coordinates Mg(2+). Gln245 provides a ligand contact to substrate. Asp273 is a binding site for Mg(2+). 317–319 (ESQ) provides a ligand contact to substrate. ATP is bound by residues Asp500 and Gly537. Asn538 provides a ligand contact to Mg(2+). Ser540 is a substrate binding site.

It belongs to the FGAMS family. Monomer. Part of the FGAM synthase complex composed of 1 PurL, 1 PurQ and 2 PurS subunits.

It is found in the cytoplasm. The enzyme catalyses N(2)-formyl-N(1)-(5-phospho-beta-D-ribosyl)glycinamide + L-glutamine + ATP + H2O = 2-formamido-N(1)-(5-O-phospho-beta-D-ribosyl)acetamidine + L-glutamate + ADP + phosphate + H(+). It participates in purine metabolism; IMP biosynthesis via de novo pathway; 5-amino-1-(5-phospho-D-ribosyl)imidazole from N(2)-formyl-N(1)-(5-phospho-D-ribosyl)glycinamide: step 1/2. Functionally, part of the phosphoribosylformylglycinamidine synthase complex involved in the purines biosynthetic pathway. Catalyzes the ATP-dependent conversion of formylglycinamide ribonucleotide (FGAR) and glutamine to yield formylglycinamidine ribonucleotide (FGAM) and glutamate. The FGAM synthase complex is composed of three subunits. PurQ produces an ammonia molecule by converting glutamine to glutamate. PurL transfers the ammonia molecule to FGAR to form FGAM in an ATP-dependent manner. PurS interacts with PurQ and PurL and is thought to assist in the transfer of the ammonia molecule from PurQ to PurL. This is Phosphoribosylformylglycinamidine synthase subunit PurL from Bacillus pumilus (strain SAFR-032).